The sequence spans 299 residues: Capsid protein (299 aa).

Residues 1–46 (MPPKVAPESSDAVSSQEQPQRPPPATPPVPTPPPGRREEVGDRAED) form a disordered region. The segment covering 20 to 34 (QRPPPATPPVPTPPP) has biased composition (pro residues). Positions 35-46 (GRREEVGDRAED) are enriched in basic and acidic residues.

Belongs to the potexviruses coat protein family.

The protein resides in the virion. Functionally, required for genome encapsidation. Forms ribonucleoprotein complexes along with TGB1 helicase and viral RNA. In Helenium virus S (HelVS), this protein is Capsid protein.